The following is a 284-amino-acid chain: Halorhodopsin (284 aa).

The Extracellular segment spans residues 1–30; it reads MIETAAADILAGGMVPLEMTQTQIFEAVQS. The chain crosses the membrane as a helical span at residues 31-56; it reads DTLLASSLWINIALAGLSILLFVYMG. Residues 57 to 62 are Cytoplasmic-facing; it reads RNVEDP. The helical transmembrane segment at 63-86 threads the bilayer; the sequence is RAQLIFVATLMVPLVSISSYTGLV. The Extracellular segment spans residues 87–110; sequence SGLTVSFLEMPAGHALAGQEVLTP. A helical membrane pass occupies residues 111–132; that stretch reads WGRYLTWALSTPMILIAVGLLA. Over 133 to 135 the chain is Cytoplasmic; it reads GSN. Residues 136 to 159 form a helical membrane-spanning segment; that stretch reads TTKLFTAVVADIGMCVTGLAAALT. Residues 160-162 lie on the Extracellular side of the membrane; sequence TSS. The helical transmembrane segment at 163–185 threads the bilayer; sequence YLLRWVWYAISCAFFVVVLYILL. The Cytoplasmic segment spans residues 186–197; it reads AEWAEDAEIAGT. A helical membrane pass occupies residues 198–221; sequence ADIFNTLKVLTVVLWLGYPIFWAL. The Extracellular portion of the chain corresponds to 222 to 230; sequence GAEGLAVLD. Residues 231-259 traverse the membrane as a helical segment; sequence VAITSWAYSGMDIVAKYLFAFLLLRWVVN. N6-(retinylidene)lysine is present on Lys-246. Topologically, residues 260–284 are cytoplasmic; that stretch reads NERTVADVASGLGSGSRGGAAPADD.

It belongs to the archaeal/bacterial/fungal opsin family.

The protein resides in the cell membrane. In terms of biological role, light-driven chloride pump. The polypeptide is Halorhodopsin (hop) (Halobacterium sp. (strain SG1)).